Consider the following 283-residue polypeptide: Hydroxyacylglutathione hydrolase-like protein (283 aa).

Zn(2+) contacts are provided by histidine 54, histidine 56, aspartate 58, histidine 59, histidine 110, aspartate 134, and histidine 173.

It belongs to the metallo-beta-lactamase superfamily. Glyoxalase II family. Requires Zn(2+) as cofactor.

Its function is as follows. Hydrolase acting on ester bonds. The chain is Hydroxyacylglutathione hydrolase-like protein (Haghl) from Mus musculus (Mouse).